A 399-amino-acid chain; its full sequence is Imidazolonepropionase (399 aa).

2 residues coordinate Fe(3+): H74 and H76. Residues H74 and H76 each contribute to the Zn(2+) site. The 4-imidazolone-5-propanoate site is built by R83, Y146, and H176. Y146 provides a ligand contact to N-formimidoyl-L-glutamate. Fe(3+) is bound at residue H238. H238 is a Zn(2+) binding site. Residue Q241 coordinates 4-imidazolone-5-propanoate. Position 312 (D312) interacts with Fe(3+). D312 lines the Zn(2+) pocket. 2 residues coordinate N-formimidoyl-L-glutamate: N314 and G316. S317 lines the 4-imidazolone-5-propanoate pocket.

This sequence belongs to the metallo-dependent hydrolases superfamily. HutI family. Zn(2+) is required as a cofactor. It depends on Fe(3+) as a cofactor.

The protein resides in the cytoplasm. The enzyme catalyses 4-imidazolone-5-propanoate + H2O = N-formimidoyl-L-glutamate. Its pathway is amino-acid degradation; L-histidine degradation into L-glutamate; N-formimidoyl-L-glutamate from L-histidine: step 3/3. In terms of biological role, catalyzes the hydrolytic cleavage of the carbon-nitrogen bond in imidazolone-5-propanoate to yield N-formimidoyl-L-glutamate. It is the third step in the universal histidine degradation pathway. This Deinococcus deserti (strain DSM 17065 / CIP 109153 / LMG 22923 / VCD115) protein is Imidazolonepropionase.